The primary structure comprises 378 residues: Cytochrome b (378 aa).

The next 4 helical transmembrane spans lie at 35-55 (FGSL…FLAM), 79-101 (WIIR…CHIG), 114-134 (TWIM…LGYV), and 180-200 (FFSL…LHIF). Residues His-85 and His-99 each contribute to the heme b site. Positions 184 and 198 each coordinate heme b. His-203 is an a ubiquinone binding site. Transmembrane regions (helical) follow at residues 226–246 (YSAK…FISF), 290–310 (LGGV…PLTH), 326–346 (FFWL…QPVC), and 350–370 (VMCS…CGPL).

It belongs to the cytochrome b family. In terms of assembly, the main subunits of complex b-c1 are: cytochrome b, cytochrome c1 and the Rieske protein. Heme b is required as a cofactor.

It is found in the mitochondrion inner membrane. Component of the ubiquinol-cytochrome c reductase complex (complex III or cytochrome b-c1 complex) that is part of the mitochondrial respiratory chain. The b-c1 complex mediates electron transfer from ubiquinol to cytochrome c. Contributes to the generation of a proton gradient across the mitochondrial membrane that is then used for ATP synthesis. This chain is Cytochrome b (mt:Cyt-b), found in Paraspadella gotoi (Arrow worm).